Reading from the N-terminus, the 237-residue chain is 4-hydroxy-tetrahydrodipicolinate reductase (237 aa).

Residues 11–16 (GASGRM), 92–94 (GTT), and 116–119 (GSNF) contribute to the NAD(+) site. Catalysis depends on His-148, which acts as the Proton donor/acceptor. His-149 is a binding site for (S)-2,3,4,5-tetrahydrodipicolinate. Lys-152 acts as the Proton donor in catalysis. Residue 158–159 (GS) participates in (S)-2,3,4,5-tetrahydrodipicolinate binding.

It belongs to the DapB family.

The protein resides in the cytoplasm. The catalysed reaction is (S)-2,3,4,5-tetrahydrodipicolinate + NAD(+) + H2O = (2S,4S)-4-hydroxy-2,3,4,5-tetrahydrodipicolinate + NADH + H(+). It catalyses the reaction (S)-2,3,4,5-tetrahydrodipicolinate + NADP(+) + H2O = (2S,4S)-4-hydroxy-2,3,4,5-tetrahydrodipicolinate + NADPH + H(+). It participates in amino-acid biosynthesis; L-lysine biosynthesis via DAP pathway; (S)-tetrahydrodipicolinate from L-aspartate: step 4/4. Its function is as follows. Catalyzes the conversion of 4-hydroxy-tetrahydrodipicolinate (HTPA) to tetrahydrodipicolinate. The polypeptide is 4-hydroxy-tetrahydrodipicolinate reductase (Xylella fastidiosa (strain 9a5c)).